The primary structure comprises 162 residues: Interleukin-15 (162 aa).

The N-terminal stretch at 1-29 (MRISKPHLRITSIQCYVCLLLNTHFLTEA) is a signal peptide. The propeptide occupies 30–48 (GIRVFILGCISAGIPKTEA). Disulfide bonds link Cys-83–Cys-133 and Cys-90–Cys-136. 3 N-linked (GlcNAc...) asparagine glycosylation sites follow: Asn-119, Asn-127, and Asn-143.

Belongs to the IL-15/IL-21 family.

The protein localises to the secreted. Functionally, cytokine that plays a major role in the development of inflammatory and protective immune responses to microbial invaders and parasites by modulating immune cells of both the innate and adaptive immune systems. Stimulates the proliferation of natural killer cells, T-cells and B-cells and promotes the secretion of several cytokines. In monocytes, induces the production of IL8 and monocyte chemotactic protein 1/CCL2, two chemokines that attract neutrophils and monocytes respectively to sites of infection. Unlike most cytokines, which are secreted in soluble form, IL15 is expressed in association with its high affinity IL15RA on the surface of IL15-producing cells and delivers signals to target cells that express IL2RB and IL2RG receptor subunits. Binding to its receptor triggers the phosphorylation of JAK1 and JAK3 and the recruitment and subsequent phosphorylation of signal transducer and activator of transcription-3/STAT3 and STAT5. In mast cells, induces the rapid tyrosine phosphorylation of STAT6 and thereby controls mast cell survival and release of cytokines such as IL4. This Marmota himalayana (Himalayan marmot) protein is Interleukin-15 (IL15).